The chain runs to 118 residues: MARVKRGVIARRRHKKILKLAKGYYGARSRVFRVAKQAVIKAGQYAYRDRRQRKRQFRALWIARINAGARQNGLSYSRLIAGLKKAAIEIDRKVLADLAVNEKAAFTAIVEKAKASLA.

Belongs to the bacterial ribosomal protein bL20 family.

Functionally, binds directly to 23S ribosomal RNA and is necessary for the in vitro assembly process of the 50S ribosomal subunit. It is not involved in the protein synthesizing functions of that subunit. This Pseudomonas aeruginosa (strain LESB58) protein is Large ribosomal subunit protein bL20.